A 782-amino-acid chain; its full sequence is Calcium-independent phospholipase A2-gamma (782 aa).

The N-linked (GlcNAc...) asparagine glycan is linked to Asn4. 2 disordered regions span residues 219–275 (EKMS…PSAI) and 317–343 (SKSQ…AEEK). Basic and acidic residues predominate over residues 220-248 (KMSQQKENEHFRDKSELEDKKVEEGKLRS). The N-linked (GlcNAc...) asparagine glycan is linked to Asn361. The region spanning 445–640 (LSIDGGGTRG…LLNNPSALAM (196 aa)) is the PNPLA domain. The GXGXXG motif lies at 449–454 (GGGTRG). The chain crosses the membrane as a helical span at residues 475–495 (LFDYICGVSTGAILAFMLGLF). The GXSXG motif lies at 481 to 485 (GVSTG). The Nucleophile role is filled by Ser483. The active-site Proton acceptor is the Asp627. The short motif at 627-629 (DGG) is the DGA/G element. Lys736 bears the N6-succinyllysine mark.

In terms of tissue distribution, expressed in parenchymal tissues including heart, skeletal muscle, placenta, brain, liver and pancreas. Also expressed in bronchial epithelial cells and kidney. Highest expression is observed in skeletal muscle and heart.

It localises to the endoplasmic reticulum membrane. The protein localises to the mitochondrion membrane. The protein resides in the peroxisome membrane. It catalyses the reaction a 1,2-diacyl-sn-glycero-3-phosphocholine + H2O = a 1-acyl-sn-glycero-3-phosphocholine + a fatty acid + H(+). It carries out the reaction a 1,2-diacyl-sn-glycero-3-phosphocholine + H2O = a 2-acyl-sn-glycero-3-phosphocholine + a fatty acid + H(+). The enzyme catalyses a 1,2-diacyl-sn-glycero-3-phosphoethanolamine + H2O = a 1-acyl-sn-glycero-3-phosphoethanolamine + a fatty acid + H(+). The catalysed reaction is a 1-O-(1Z-alkenyl)-2-acyl-sn-glycero-3-phosphocholine + H2O = a 1-O-(1Z-alkenyl)-sn-glycero-3-phosphocholine + a fatty acid + H(+). It catalyses the reaction a 1-acyl-sn-glycero-3-phosphocholine + H2O = sn-glycerol 3-phosphocholine + a fatty acid + H(+). It carries out the reaction 1-acyl-2-(9Z,12Z)-octadecadienoyl-sn-glycero-3-phosphocholine + H2O = a 1-acyl-sn-glycero-3-phosphocholine + (9Z,12Z)-octadecadienoate + H(+). The enzyme catalyses 1-acyl-2-(5Z,8Z,11Z,14Z-eicosatetraenoyl)-sn-glycero-3-phosphocholine + H2O = a 1-acyl-sn-glycero-3-phosphocholine + (5Z,8Z,11Z,14Z)-eicosatetraenoate + H(+). The catalysed reaction is 1-hexadecanoyl-2-(5Z,8Z,11Z,14Z-eicosatetraenoyl)-sn-glycero-3-phosphocholine + H2O = 1-hexadecanoyl-sn-glycero-3-phosphocholine + (5Z,8Z,11Z,14Z)-eicosatetraenoate + H(+). It catalyses the reaction 1-octadecanoyl-2-(9Z-octadecenoyl)-sn-glycero-3-phosphocholine + H2O = 1-octadecanoyl-sn-glycero-3-phosphocholine + (9Z)-octadecenoate + H(+). It carries out the reaction 1-hexadecanoyl-2-(9Z-octadecenoyl)-sn-glycero-3-phosphocholine + H2O = 1-hexadecanoyl-sn-glycero-3-phosphocholine + (9Z)-octadecenoate + H(+). The enzyme catalyses 1-hexadecanoyl-2-(9Z,12Z-octadecadienoyl)-sn-glycero-3-phosphocholine + H2O = (9Z,12Z)-octadecadienoate + 1-hexadecanoyl-sn-glycero-3-phosphocholine + H(+). The catalysed reaction is 1-acyl-2-(9Z,12Z)-octadecadienoyl-sn-glycero-3-phosphoethanolamine + H2O = a 1-acyl-sn-glycero-3-phosphoethanolamine + (9Z,12Z)-octadecadienoate + H(+). It catalyses the reaction 1-acyl-2-(5Z,8Z,11Z,14Z)-eicosatetraenoyl-sn-glycero-3-phosphoethanolamine + H2O = a 1-acyl-sn-glycero-3-phosphoethanolamine + (5Z,8Z,11Z,14Z)-eicosatetraenoate + H(+). It carries out the reaction 1-hexadecanoyl-2-(5Z,8Z,11Z,14Z-eicosatetraenoyl)-sn-glycero-3-phosphoethanolamine + H2O = 1-hexadecanoyl-sn-glycero-3-phosphoethanolamine + (5Z,8Z,11Z,14Z)-eicosatetraenoate + H(+). The enzyme catalyses 1-hexadecanoyl-2-(5Z,8Z,11Z,14Z-eicosatetraenoyl)-sn-glycero-3-phosphocholine + H2O = 2-(5Z,8Z,11Z,14Z)-eicosatetraenoyl-sn-glycero-3-phosphocholine + hexadecanoate + H(+). The catalysed reaction is 1-octadecanoyl-2-(9Z-octadecenoyl)-sn-glycero-3-phosphocholine + H2O = 2-(9Z-octadecenoyl)-sn-glycero-3-phosphocholine + octadecanoate + H(+). It catalyses the reaction 1-hexadecanoyl-2-(4Z,7Z,10Z,13Z,16Z,19Z-docosahexaenoyl)-sn-glycero-3-phosphocholine + H2O = 2-(4Z,7Z,10Z,13Z,16Z,19Z-docosahexaenoyl)-sn-glycero-3-phosphocholine + hexadecanoate + H(+). It carries out the reaction 1-O-(1Z)-hexadecenyl-2 (5Z,8Z,11Z,14Z)-eicosatetraenoyl-sn-glycero-3-phosphocholine + H2O = 1-(1Z-hexadecenyl)-sn-glycero-3-phosphocholine + (5Z,8Z,11Z,14Z)-eicosatetraenoate + H(+). The enzyme catalyses 1-O-(1Z-hexadecenyl)-2-(9Z-octadecenoyl)-sn-glycero-3-phosphocholine + H2O = 1-(1Z-hexadecenyl)-sn-glycero-3-phosphocholine + (9Z)-octadecenoate + H(+). The catalysed reaction is 1-hexadecanoyl-sn-glycero-3-phosphocholine + H2O = sn-glycerol 3-phosphocholine + hexadecanoate + H(+). It catalyses the reaction 1',3'-bis-[1,2-di-(9Z,12Z-octadecadienoyl)-sn-glycero-3-phospho]-glycerol + H2O = 1'-[1,2-di-(9Z,12Z-octadecadienoyl)-sn-glycero-3-phospho]-3'-[1-(9Z,12Z-octadecadienoyl)-sn-glycero-3-phospho]-glycerol + (9Z,12Z)-octadecadienoate + H(+). It carries out the reaction 1'-[1-acyl-2-(9-hydroxy-(10E,12Z)-octadecadienoyl)-sn-glycero-3-phospho]-3'-[1,2-diacyl-sn-glycero-3-phospho]-glycerol + H2O = 9-hydroxy-(10E,12Z)-octadecadienoate + 1'-[1,2-diacyl-sn-glycero-3-phospho],3'-[1-acyl-sn-glycero-3-phospho]-glycerol + H(+). The protein operates within phospholipid metabolism. With respect to regulation, calcium-independent phospholipase. Inhibited by (E)-6-bromomethylene-3-1-naphthalenyl-2H-tetrahydropyran-2-one (BEL). The activity toward 1-hexadecanoyl-2-(5Z,8Z,11Z,14Z-eicosatetraenoyl)-sn-glycero-3-phosphocholine is stimulated by cardiolipin. Its function is as follows. Calcium-independent and membrane-bound phospholipase, that catalyzes the esterolytic cleavage of fatty acids from glycerophospholipids to yield free fatty acids and lysophospholipids, hence regulating membrane physical properties and the release of lipid second messengers and growth factors. Hydrolyzes phosphatidylethanolamine, phosphatidylcholine and probably phosphatidylinositol with a possible preference for the former. Also has a broad substrate specificity in terms of fatty acid moieties, hydrolyzing saturated and mono-unsaturated fatty acids at nearly equal rates from either the sn-1 or sn-2 position in diacyl phosphatidylcholine. However, has a weak activity toward polyunsaturated fatty acids at the sn-2 position, and thereby favors the production of 2-arachidonoyl lysophosphatidylcholine, a key branch point metabolite in eicosanoid signaling. On the other hand, can produce arachidonic acid from the sn-1 position of diacyl phospholipid and from the sn-2 position of arachidonate-containing plasmalogen substrates. Therefore, plays an important role in the mobilization of arachidonic acid in response to cellular stimuli and the generation of lipid second messengers. Can also hydrolyze lysophosphatidylcholine. In the mitochondrial compartment, catalyzes the hydrolysis and release of oxidized aliphatic chains from cardiolipin and integrates mitochondrial bioenergetics and signaling. It is essential for maintaining efficient bioenergetic mitochondrial function through tailoring mitochondrial membrane lipid metabolism and composition. This is Calcium-independent phospholipase A2-gamma from Homo sapiens (Human).